The following is a 263-amino-acid chain: 4-hydroxy-tetrahydrodipicolinate reductase (263 aa).

NAD(+) contacts are provided by residues 8-13 (GASGRM), aspartate 34, 99-101 (GTT), and 125-128 (SPNY). The Proton donor/acceptor role is filled by histidine 157. Histidine 158 contributes to the (S)-2,3,4,5-tetrahydrodipicolinate binding site. Lysine 161 acts as the Proton donor in catalysis. 167–168 (GT) lines the (S)-2,3,4,5-tetrahydrodipicolinate pocket.

Belongs to the DapB family.

The protein resides in the cytoplasm. It catalyses the reaction (S)-2,3,4,5-tetrahydrodipicolinate + NAD(+) + H2O = (2S,4S)-4-hydroxy-2,3,4,5-tetrahydrodipicolinate + NADH + H(+). It carries out the reaction (S)-2,3,4,5-tetrahydrodipicolinate + NADP(+) + H2O = (2S,4S)-4-hydroxy-2,3,4,5-tetrahydrodipicolinate + NADPH + H(+). It participates in amino-acid biosynthesis; L-lysine biosynthesis via DAP pathway; (S)-tetrahydrodipicolinate from L-aspartate: step 4/4. Functionally, catalyzes the conversion of 4-hydroxy-tetrahydrodipicolinate (HTPA) to tetrahydrodipicolinate. The sequence is that of 4-hydroxy-tetrahydrodipicolinate reductase from Methanococcoides burtonii (strain DSM 6242 / NBRC 107633 / OCM 468 / ACE-M).